The primary structure comprises 548 residues: Pentatricopeptide repeat-containing protein At5g15300 (548 aa).

PPR repeat units follow at residues Asp76 to Pro110, Asp111 to Leu145, Asn146 to Ala176, His177 to Ala211, Trp212 to Lys238, Asp239 to Pro273, Asp274 to Ser308, Gly314 to Thr348, Trp349 to Pro378, Asn379 to Met409, and Asn415 to Glu445. The interval Val450–Asp525 is type E motif.

This sequence belongs to the PPR family. PCMP-E subfamily.

The polypeptide is Pentatricopeptide repeat-containing protein At5g15300 (PCMP-E40) (Arabidopsis thaliana (Mouse-ear cress)).